A 22-amino-acid polypeptide reads, in one-letter code: Brain peptide MVPVPVHHMADELLRNGPDTVI (22 aa).

The sequence is that of Brain peptide MVPVPVHHMADELLRNGPDTVI from Apis mellifera (Honeybee).